The sequence spans 660 residues: MLVCYSVLACEILWDLPCSIMGSPLGHFTWDKYLKETCSVPAPVHCFKQSYTPPSNEFKISMKLEAQDPRNTTSTCIATVVGLTGARLRLRLDGSDNKNDFWRLVDSAEIQPIGNCEKNGGMLQPPLGFRLNASSWPMFLLKTLNGAEMAPIRIFHKEPPSPSHNFFKMGMKLEAVDRKNPHFICPATIGEVRGSEVLVTFDGWRGAFDYWCRFDSRDIFPVGWCSLTGDNLQPPGTKVVIPKNPYPASDVNTEKPSIHSSTKTVLEHQPGQRGRKPGKKRGRTPKTLISHPISAPSKTAEPLKFPKKRGPKPGSKRKPRTLLNPPPASPTTSTPEPDTSTVPQDAATIPSSAMQAPTVCIYLNKNGSTGPHLDKKKVQQLPDHFGPARASVVLQQAVQACIDCAYHQKTVFSFLKQGHGGEVISAVFDREQHTLNLPAVNSITYVLRFLEKLCHNLRSDNLFGNQPFTQTHLSLTAIEYSHSHDRYLPGETFVLGNSLARSLEPHSDSMDSASNPTNLVSTSQRHRPLLSSCGLPPSTASAVRRLCSRGVLKGSNERRDMESFWKLNRSPGSDRYLESRDASRLSGRDPSSWTVEDVMQFVREADPQLGPHADLFRKHEIDGKALLLLRSDMMMKYMGLKLGPALKLSYHIDRLKQGKF.

2 MBT repeats span residues 28–126 and 134–235; these read FTWD…LQPP and SSWP…LQPP. Positions 233-345 are disordered; that stretch reads QPPGTKVVIP…EPDTSTVPQD (113 aa). 2 stretches are compositionally biased toward basic residues: residues 273-284 and 305-320; these read RGRKPGKKRGRT and FPKK…RKPR. Low complexity predominate over residues 330 to 343; the sequence is PTTSTPEPDTSTVP. The SAM domain maps to 593–658; the sequence is WTVEDVMQFV…SYHIDRLKQG (66 aa).

Belongs to the SCM family. In terms of assembly, interacts with the SAM domain of PHC1 via its SAM domain in vitro. Associates with a PRC1-like complex. Strongly expressed in heart, muscle and pancreas. Weakly expressed in brain, placenta, lung, liver and kidney.

It is found in the nucleus. In terms of biological role, associates with Polycomb group (PcG) multiprotein complexes; the complex class is required to maintain the transcriptionally repressive state of some genes. In Homo sapiens (Human), this protein is Polycomb protein SCMH1.